The sequence spans 796 residues: Protocadherin beta-3 (796 aa).

The signal sequence occupies residues 1-26 (MEAGGERFLRQRQVLLLFVFLGGSLA). The Extracellular portion of the chain corresponds to 27–690 (GSESRRYSVA…AQADLLTVYL (664 aa)). Cadherin domains are found at residues 35-133 (VAEE…SPVF), 138-242 (MHLK…APEF), 247-347 (YEVA…PPEL), 352-451 (VNSP…APAF), and 456-561 (YTLF…SPFV). N-linked (GlcNAc...) asparagine glycosylation occurs at Asn-169. 2 N-linked (GlcNAc...) asparagine glycosylation sites follow: Asn-418 and Asn-436. Asn-567 is a glycosylation site (N-linked (GlcNAc...) asparagine). In terms of domain architecture, Cadherin 6 spans 568-671 (GSAPCTELVP…LVDGFSQPYL (104 aa)). Residues 691–711 (VVALASVSSLFLFSVLLFVAV) form a helical membrane-spanning segment. Over 712–796 (RLCRRSRAAS…PSFRKSFEFS (85 aa)) the chain is Cytoplasmic.

The protein resides in the cell membrane. Potential calcium-dependent cell-adhesion protein. May be involved in the establishment and maintenance of specific neuronal connections in the brain. The chain is Protocadherin beta-3 (PCDHB3) from Homo sapiens (Human).